We begin with the raw amino-acid sequence, 462 residues long: Chromosomal replication initiator protein DnaA (462 aa).

Positions Met1–Ala84 are domain I, interacts with DnaA modulators. The tract at residues Ala84–Ser125 is domain II. A domain III, AAA+ region region spans residues Asn126–Ala342. 4 residues coordinate ATP: Gly170, Gly172, Lys173, and Thr174. The interval Asn343–Ser462 is domain IV, binds dsDNA.

It belongs to the DnaA family. In terms of assembly, oligomerizes as a right-handed, spiral filament on DNA at oriC.

The protein localises to the cytoplasm. Its function is as follows. Plays an essential role in the initiation and regulation of chromosomal replication. ATP-DnaA binds to the origin of replication (oriC) to initiate formation of the DNA replication initiation complex once per cell cycle. Binds the DnaA box (a 9 base pair repeat at the origin) and separates the double-stranded (ds)DNA. Forms a right-handed helical filament on oriC DNA; dsDNA binds to the exterior of the filament while single-stranded (ss)DNA is stabiized in the filament's interior. The ATP-DnaA-oriC complex binds and stabilizes one strand of the AT-rich DNA unwinding element (DUE), permitting loading of DNA polymerase. After initiation quickly degrades to an ADP-DnaA complex that is not apt for DNA replication. Binds acidic phospholipids. The chain is Chromosomal replication initiator protein DnaA from Shewanella woodyi (strain ATCC 51908 / MS32).